Reading from the N-terminus, the 340-residue chain is CaiB/baiF CoA-transferase family protein ZK892.4 (340 aa).

Catalysis depends on Asp-154, which acts as the Nucleophile.

Belongs to the CoA-transferase III family.

The chain is CaiB/baiF CoA-transferase family protein ZK892.4 from Caenorhabditis elegans.